A 695-amino-acid polypeptide reads, in one-letter code: Probable rhamnogalacturonate lyase C (695 aa).

An N-terminal signal peptide occupies residues 1–21 (MFLPSRKALAFLACLASHSVA). N-linked (GlcNAc...) asparagine glycans are attached at residues Asn28, Asn96, Asn118, Asn144, Asn199, Asn285, Asn532, and Asn638.

It belongs to the polysaccharide lyase 4 family.

The protein localises to the secreted. It carries out the reaction Endotype eliminative cleavage of L-alpha-rhamnopyranosyl-(1-&gt;4)-alpha-D-galactopyranosyluronic acid bonds of rhamnogalacturonan I domains in ramified hairy regions of pectin leaving L-rhamnopyranose at the reducing end and 4-deoxy-4,5-unsaturated D-galactopyranosyluronic acid at the non-reducing end.. Its function is as follows. Pectinolytic enzymes consist of four classes of enzymes: pectin lyase, polygalacturonase, pectin methylesterase and rhamnogalacturonase. Degrades the rhamnogalacturonan I (RG-I) backbone of pectin. This chain is Probable rhamnogalacturonate lyase C (rglC), found in Aspergillus oryzae (strain ATCC 42149 / RIB 40) (Yellow koji mold).